A 139-amino-acid chain; its full sequence is Putative pre-16S rRNA nuclease (139 aa).

The protein belongs to the YqgF nuclease family.

Its subcellular location is the cytoplasm. In terms of biological role, could be a nuclease involved in processing of the 5'-end of pre-16S rRNA. The protein is Putative pre-16S rRNA nuclease of Streptococcus thermophilus (strain CNRZ 1066).